The sequence spans 493 residues: Alpha-amylase-related protein (493 aa).

Positions 1–19 (MFKFALTLTLCLAGSLSLA) are cleaved as a signal peptide. At Gln20 the chain carries Pyrrolidone carboxylic acid. A disulfide bridge connects residues Cys47 and Cys103. The Ca(2+) site is built by Asn117, Gln168, and Asp177. Cys156 and Cys170 form a disulfide bridge. Arg205 lines the chloride pocket. The active-site Nucleophile is Asp207. His211 serves as a coordination point for Ca(2+). Glu244 serves as the catalytic Proton donor. 2 residues coordinate chloride: Asn307 and Arg342. Cystine bridges form between Cys375-Cys381, Cys417-Cys440, and Cys447-Cys459.

Belongs to the glycosyl hydrolase 13 family. As to quaternary structure, monomer. Requires Ca(2+) as cofactor. Chloride is required as a cofactor.

The protein resides in the secreted. The catalysed reaction is Endohydrolysis of (1-&gt;4)-alpha-D-glucosidic linkages in polysaccharides containing three or more (1-&gt;4)-alpha-linked D-glucose units.. The protein is Alpha-amylase-related protein (Amyrel) of Drosophila simulans (Fruit fly).